A 472-amino-acid chain; its full sequence is GTPase Der (472 aa).

EngA-type G domains lie at 3–166 (PVIA…PEQE) and 176–349 (IRIG…DSAM). Residues 9 to 16 (GRPNVGKS), 56 to 60 (DTGGI), 118 to 121 (NKID), 182 to 189 (GRPNVGKS), 229 to 233 (DTAGV), and 294 to 297 (NKWD) contribute to the GTP site. One can recognise a KH-like domain in the interval 350 to 434 (AKWSTNQLTT…PIRFEFRSGE (85 aa)). Residues 433 to 472 (GENPFAGKKNKLSPRQQKKKERLMKHVKKLKHKQKRKKSR) are disordered. Basic residues predominate over residues 440 to 472 (KKNKLSPRQQKKKERLMKHVKKLKHKQKRKKSR).

Belongs to the TRAFAC class TrmE-Era-EngA-EngB-Septin-like GTPase superfamily. EngA (Der) GTPase family. As to quaternary structure, associates with the 50S ribosomal subunit.

In terms of biological role, GTPase that plays an essential role in the late steps of ribosome biogenesis. The chain is GTPase Der from Hahella chejuensis (strain KCTC 2396).